The chain runs to 358 residues: Ganglioside-induced differentiation-associated protein 1 (358 aa).

The GST N-terminal domain occupies 24–105; it reads VKLILYHWTH…YLEQTFLDER (82 aa). Glycyl lysine isopeptide (Lys-Gly) (interchain with G-Cter in ubiquitin) cross-links involve residues Lys-50, Lys-172, Lys-173, Lys-188, and Lys-190. One can recognise a GST C-terminal domain in the interval 153 to 309; it reads PAYATTRIRS…LISAVLPTAF (157 aa). Residue Lys-203 is modified to N6-acetyllysine; alternate. Residue Lys-203 forms a Glycyl lysine isopeptide (Lys-Gly) (interchain with G-Cter in ubiquitin); alternate linkage. Glycyl lysine isopeptide (Lys-Gly) (interchain with G-Cter in ubiquitin) cross-links involve residues Lys-206, Lys-207, and Lys-214. The next 2 membrane-spanning stretches (helical) occupy residues 292 to 312 and 320 to 340; these read VLGH…FRVA and LGTT…FMLF. Residues 320-358 are required for mitochondrial localization; it reads LGTTLVVGLLAGVGYFAFMLFRKRLGSMILAFRPRPNYF.

It belongs to the GST superfamily. As to quaternary structure, homodimer. Post-translationally, ubiquitinated by PRKN during mitophagy, leading to its degradation and enhancement of mitophagy. Deubiquitinated by USP30. Highly expressed in whole brain and spinal cord. Predominant expression in central tissues of the nervous system not only in neurons but also in Schwann cells.

Its subcellular location is the mitochondrion outer membrane. The protein resides in the cytoplasm. In terms of biological role, regulates the mitochondrial network by promoting mitochondrial fission. This Homo sapiens (Human) protein is Ganglioside-induced differentiation-associated protein 1 (GDAP1).